The chain runs to 291 residues: Ribosomal RNA small subunit methyltransferase A (291 aa).

The S-adenosyl-L-methionine site is built by N28, L30, G55, E77, D103, and N123.

This sequence belongs to the class I-like SAM-binding methyltransferase superfamily. rRNA adenine N(6)-methyltransferase family. RsmA subfamily.

The protein resides in the cytoplasm. The enzyme catalyses adenosine(1518)/adenosine(1519) in 16S rRNA + 4 S-adenosyl-L-methionine = N(6)-dimethyladenosine(1518)/N(6)-dimethyladenosine(1519) in 16S rRNA + 4 S-adenosyl-L-homocysteine + 4 H(+). Specifically dimethylates two adjacent adenosines (A1518 and A1519) in the loop of a conserved hairpin near the 3'-end of 16S rRNA in the 30S particle. May play a critical role in biogenesis of 30S subunits. This Azorhizobium caulinodans (strain ATCC 43989 / DSM 5975 / JCM 20966 / LMG 6465 / NBRC 14845 / NCIMB 13405 / ORS 571) protein is Ribosomal RNA small subunit methyltransferase A.